Here is a 482-residue protein sequence, read N- to C-terminus: Adenylyltransferase and sulfurtransferase uba4 (482 aa).

Residues 33–57 (EGAALRAQSQKTASANATTGQRTKS) form a disordered region. Polar residues predominate over residues 39–54 (AQSQKTASANATTGQR). ATP contacts are provided by residues G98, D119, 126–130 (SNLHR), K143, and 187–188 (DN). Zn(2+)-binding residues include C236 and C239. C253 (glycyl thioester intermediate; for adenylyltransferase activity) is an active-site residue. 2 residues coordinate Zn(2+): C315 and C318. The Rhodanese domain maps to 366–480 (AGAQRHIIDV…WREQVDPDWP (115 aa)). The active-site Cysteine persulfide intermediate; for sulfurtransferase activity is C435.

It in the N-terminal section; belongs to the HesA/MoeB/ThiF family. UBA4 subfamily. Zn(2+) serves as cofactor.

Its subcellular location is the cytoplasm. It localises to the cytosol. The enzyme catalyses [molybdopterin-synthase sulfur-carrier protein]-C-terminal Gly-Gly + ATP + H(+) = [molybdopterin-synthase sulfur-carrier protein]-C-terminal Gly-Gly-AMP + diphosphate. The catalysed reaction is [molybdopterin-synthase sulfur-carrier protein]-C-terminal Gly-Gly-AMP + S-sulfanyl-L-cysteinyl-[cysteine desulfurase] + AH2 = [molybdopterin-synthase sulfur-carrier protein]-C-terminal-Gly-aminoethanethioate + L-cysteinyl-[cysteine desulfurase] + A + AMP + 2 H(+). It functions in the pathway tRNA modification; 5-methoxycarbonylmethyl-2-thiouridine-tRNA biosynthesis. Its pathway is cofactor biosynthesis; molybdopterin biosynthesis. Its function is as follows. Plays a central role in 2-thiolation of mcm(5)S(2)U at tRNA wobble positions of cytosolic tRNA(Lys), tRNA(Glu) and tRNA(Gln). Also essential during biosynthesis of the molybdenum cofactor. Acts by mediating the C-terminal thiocarboxylation of sulfur carriers urm1 and mocs2a. Its N-terminus first activates urm1 and mocs2a as acyl-adenylates (-COAMP), then the persulfide sulfur on the catalytic cysteine is transferred to urm1 and mocs2a to form thiocarboxylation (-COSH) of their C-terminus. The reaction probably involves hydrogen sulfide that is generated from the persulfide intermediate and that acts as a nucleophile towards urm1 and mocs2a. Subsequently, a transient disulfide bond is formed. Does not use thiosulfate as sulfur donor; nfs1 probably acting as a sulfur donor for thiocarboxylation reactions. The sequence is that of Adenylyltransferase and sulfurtransferase uba4 from Emericella nidulans (strain FGSC A4 / ATCC 38163 / CBS 112.46 / NRRL 194 / M139) (Aspergillus nidulans).